We begin with the raw amino-acid sequence, 117 residues long: Envelope glycoprotein J (117 aa).

Positions 1–26 (MRSLLFVVGAWVAAAVTHLTPNAALA) are cleaved as a signal peptide. The tract at residues 26–64 (ATGTTPTVGANSTADPGTGANGTTVPAAGTPANSTTAAE) is disordered. The span at 27–40 (TGTTPTVGANSTAD) shows a compositional bias: polar residues. The Extracellular segment spans residues 27–73 (TGTTPTVGANSTADPGTGANGTTVPAAGTPANSTTAAETPAPFPPVD). N-linked (GlcNAc...) asparagine; by host glycans are attached at residues Asn36, Asn46, and Asn58. The helical transmembrane segment at 74–94 (FALPVVIGGLCALTLAAMGAG) threads the bilayer. At 95–117 (ALLHRCCRRAAARRRQRAAYVYA) the chain is on the cytoplasmic side.

The protein belongs to the alphaherpesvirinae glycoprotein J family.

It is found in the host Golgi apparatus membrane. It localises to the host endoplasmic reticulum membrane. Its subcellular location is the host endosome membrane. Functionally, inhibits host cell apoptosis. Induces an increase in reactive oxygen species (ROS) in the host cell. In Homo sapiens (Human), this protein is Envelope glycoprotein J (gJ).